Here is a 438-residue protein sequence, read N- to C-terminus: Adenylosuccinate synthetase (438 aa).

Residues 13–19 and 41–43 contribute to the GTP site; these read GDEGKGK and GHT. The active-site Proton acceptor is the Asp-14. Mg(2+)-binding residues include Asp-14 and Gly-41. IMP contacts are provided by residues 14 to 17, 39 to 42, Thr-130, Arg-144, Gln-225, Thr-240, and Arg-312; these read DEGK and NAGH. His-42 serves as the catalytic Proton donor. 308 to 314 serves as a coordination point for substrate; that stretch reads ATTGRQR. Residues Arg-314, 340–342, and 422–424 contribute to the GTP site; these read KLD and STG.

This sequence belongs to the adenylosuccinate synthetase family. Homodimer. Mg(2+) serves as cofactor.

Its subcellular location is the cytoplasm. It carries out the reaction IMP + L-aspartate + GTP = N(6)-(1,2-dicarboxyethyl)-AMP + GDP + phosphate + 2 H(+). The protein operates within purine metabolism; AMP biosynthesis via de novo pathway; AMP from IMP: step 1/2. In terms of biological role, plays an important role in the de novo pathway of purine nucleotide biosynthesis. Catalyzes the first committed step in the biosynthesis of AMP from IMP. This is Adenylosuccinate synthetase from Vesicomyosocius okutanii subsp. Calyptogena okutanii (strain HA).